Here is a 219-residue protein sequence, read N- to C-terminus: Small ribosomal subunit protein uS3c (219 aa).

Positions 47–119 (VRKYVRTAEN…KFIISLAEVE (73 aa)) constitute a KH type-2 domain.

It belongs to the universal ribosomal protein uS3 family. In terms of assembly, part of the 30S ribosomal subunit.

It localises to the plastid. Its subcellular location is the chloroplast. This chain is Small ribosomal subunit protein uS3c (rps3), found in Staurastrum punctulatum (Green alga).